Here is a 27-residue protein sequence, read N- to C-terminus: Alpha-amylase/trypsin inhibitor CM17 (27 aa).

Belongs to the protease inhibitor I6 (cereal trypsin/alpha-amylase inhibitor) family. As to expression, developing endosperm.

It localises to the secreted. Its function is as follows. Alpha-amylase/trypsin inhibitor. It could be involved in insect defense mechanisms. This chain is Alpha-amylase/trypsin inhibitor CM17, found in Triticum aestivum (Wheat).